A 185-amino-acid polypeptide reads, in one-letter code: dTTP/UTP pyrophosphatase (185 aa).

D64 functions as the Proton acceptor in the catalytic mechanism.

The protein belongs to the Maf family. YhdE subfamily. A divalent metal cation is required as a cofactor.

The protein localises to the cytoplasm. The catalysed reaction is dTTP + H2O = dTMP + diphosphate + H(+). It carries out the reaction UTP + H2O = UMP + diphosphate + H(+). Nucleoside triphosphate pyrophosphatase that hydrolyzes dTTP and UTP. May have a dual role in cell division arrest and in preventing the incorporation of modified nucleotides into cellular nucleic acids. This is dTTP/UTP pyrophosphatase from Thermococcus gammatolerans (strain DSM 15229 / JCM 11827 / EJ3).